A 404-amino-acid chain; its full sequence is uncharacterized protein (404 aa).

Belongs to the lymphocryptovirus BTRF1 family.

This is an uncharacterized protein from Epstein-Barr virus (strain GD1) (HHV-4).